The following is a 263-amino-acid chain: Methylesterase 2 (263 aa).

Serine 85 (acyl-ester intermediate) is an active-site residue. Active-site charge relay system residues include aspartate 213 and histidine 241.

Belongs to the AB hydrolase superfamily. Methylesterase family.

It catalyses the reaction methyl (indol-3-yl)acetate + H2O = (indol-3-yl)acetate + methanol + H(+). It carries out the reaction methyl (-)-jasmonate + H2O = jasmonate + methanol + H(+). The enzyme catalyses methyl salicylate + H2O = salicylate + methanol + H(+). It functions in the pathway plant hormone biosynthesis. The protein operates within lipid metabolism; oxylipin biosynthesis. Its activity is regulated as follows. Esterase activity is down-regulated by salicylic acid (SA). Down-regulated by agrochemicals Paraoxon, 3,4-DCl and Profenofos. Methylesterase shown to have carboxylesterase activity, methyl indole-3-acetic acid (MeIAA) esterase activity, methyl salicylate (MeSA) esterase activity and methyl jasmonate (MeJA) esterase activity in vitro. The chain is Methylesterase 2 from Arabidopsis thaliana (Mouse-ear cress).